The chain runs to 165 residues: Large ribosomal subunit protein uL10 (165 aa).

Belongs to the universal ribosomal protein uL10 family. Part of the ribosomal stalk of the 50S ribosomal subunit. The N-terminus interacts with L11 and the large rRNA to form the base of the stalk. The C-terminus forms an elongated spine to which L12 dimers bind in a sequential fashion forming a multimeric L10(L12)X complex.

Functionally, forms part of the ribosomal stalk, playing a central role in the interaction of the ribosome with GTP-bound translation factors. The protein is Large ribosomal subunit protein uL10 of Buchnera aphidicola subsp. Acyrthosiphon pisum (strain 5A).